Reading from the N-terminus, the 184-residue chain is Photosystem I assembly protein Ycf4 (184 aa).

2 consecutive transmembrane segments (helical) span residues 22–42 and 57–77; these read FCWA…GTSS and ILFF…LFIS.

It belongs to the Ycf4 family.

The protein localises to the plastid. Its subcellular location is the chloroplast thylakoid membrane. Its function is as follows. Seems to be required for the assembly of the photosystem I complex. The protein is Photosystem I assembly protein Ycf4 of Liriodendron tulipifera (Tuliptree).